A 261-amino-acid polypeptide reads, in one-letter code: Na(+)-translocating NADH-quinone reductase subunit C (261 aa).

A helical transmembrane segment spans residues Leu11–Ala31. Thr230 is modified (FMN phosphoryl threonine).

It belongs to the NqrC family. In terms of assembly, composed of six subunits; NqrA, NqrB, NqrC, NqrD, NqrE and NqrF. It depends on FMN as a cofactor.

The protein localises to the cell inner membrane. The catalysed reaction is a ubiquinone + n Na(+)(in) + NADH + H(+) = a ubiquinol + n Na(+)(out) + NAD(+). Functionally, NQR complex catalyzes the reduction of ubiquinone-1 to ubiquinol by two successive reactions, coupled with the transport of Na(+) ions from the cytoplasm to the periplasm. NqrA to NqrE are probably involved in the second step, the conversion of ubisemiquinone to ubiquinol. This chain is Na(+)-translocating NADH-quinone reductase subunit C, found in Pseudomonas aeruginosa (strain ATCC 15692 / DSM 22644 / CIP 104116 / JCM 14847 / LMG 12228 / 1C / PRS 101 / PAO1).